The following is a 55-amino-acid chain: Beta-toxin Cn7 (55 aa).

Residues 1–55 (KEGYIVNYHDGCKYECYKLGDNDYCLRECKLRVGKGAGGYCYAFACWCTHLYEQA) enclose the LCN-type CS-alpha/beta domain. Intrachain disulfides connect C16/C41, C25/C46, and C29/C48.

The protein belongs to the long (3 C-C) scorpion toxin superfamily. Sodium channel inhibitor family. Beta subfamily. Expressed by the venom gland.

The protein resides in the secreted. Functionally, beta toxins bind voltage-independently at site-4 of sodium channels (Nav) and shift the voltage of activation toward more negative potentials thereby affecting sodium channel activation and promoting spontaneous and repetitive firing. The polypeptide is Beta-toxin Cn7 (Centruroides noxius (Mexican scorpion)).